Here is a 465-residue protein sequence, read N- to C-terminus: Soluble pyridine nucleotide transhydrogenase (465 aa).

35-44 (ERYNNVGGGC) serves as a coordination point for FAD.

This sequence belongs to the class-I pyridine nucleotide-disulfide oxidoreductase family. FAD is required as a cofactor.

Its subcellular location is the cytoplasm. It catalyses the reaction NAD(+) + NADPH = NADH + NADP(+). Its function is as follows. Conversion of NADPH, generated by peripheral catabolic pathways, to NADH, which can enter the respiratory chain for energy generation. The sequence is that of Soluble pyridine nucleotide transhydrogenase from Photorhabdus laumondii subsp. laumondii (strain DSM 15139 / CIP 105565 / TT01) (Photorhabdus luminescens subsp. laumondii).